The chain runs to 80 residues: Diphthamide biosynthesis protein 3 (80 aa).

The DPH-type MB domain maps to 4-60; it reads FHDEVEIEDFEFDEEKDVYHYPCPCGDRFEIPREMLEMGEDVAQCPSCSLLIRVIYD. 4 residues coordinate Fe cation: C26, C28, C48, and C51.

It belongs to the DPH3 family. In terms of assembly, component of the 2-(3-amino-3-carboxypropyl)histidine synthase complex composed of dph-1, dph-2, dph-3 and a NADH-dependent reductase. Requires Fe(2+) as cofactor.

The enzyme catalyses [3Fe-4S](1+)-[protein] + Fe(2+)-[Dph3] = [3Fe-4S](0)-[protein] + Fe(3+)-[Dph3]. It carries out the reaction 2 [3Fe-4S](0)-[protein] + 2 Fe(2+)-[Dph3] + NADH = 2 [4Fe-4S](1+)-[protein] + 2 [Dph3] + NAD(+) + H(+). It participates in protein modification; peptidyl-diphthamide biosynthesis. In terms of biological role, required for the first step of diphthamide biosynthesis, a post-translational modification of histidine which occurs in elongation factor 2. Dph-1 and dph-2 transfer a 3-amino-3-carboxypropyl (ACP) group from S-adenosyl-L-methionine (SAM) to a histidine residue, the reaction is assisted by a reduction system comprising dph-3 and a NADH-dependent reductase. Acts as an electron donor to reduce the Fe-S cluster in dph1-dph2 keeping the [4Fe-4S] clusters in the active and reduced state. Restores iron to dph-1-dph-2 iron-sulfur clusters which have degraded from [4Fe-4S] to [3Fe-4S] by donating an iron atom to reform [4Fe-4S] clusters, in a manner dependent on the presence of elongation factor 2 and SAM. Associates with the elongator complex and is required for tRNA Wobble base modifications mediated by the elongator complex. The elongator complex is required for multiple tRNA modifications, including mcm5U (5-methoxycarbonylmethyl uridine), mcm5s 2U (5-methoxycarbonylmethyl-2-thiouridine), and ncm5U (5-carbamoylmethyl uridine). The chain is Diphthamide biosynthesis protein 3 from Caenorhabditis elegans.